The chain runs to 349 residues: MDLTVEPDLNSLITSSTHRWIFVGGKGGVGKTTSSCSIAIQMALAQPEKQYLLISTDPAHNLSDAFGEKFGKDARKVTGMNNLSCMEIDPSAALKDMNDMAVANNATGSGEFSDLLQGGALSELTGSIPGIDEALSFMEVMKHIKNQEQGEGDRYDTVIFDTAPTGHTLRFLQLPSTLSKLLEKFGEITARLGPMLNSLAGANNVDLVGKMSELKSNVEKIKEQFTNPDMTTFVCVCISEFLSLYETERLVQELISYDMDVNSIIVNQLLFAEYDEGDSCKRCQSRWKMQKKYLDQIDELYEDFHIVKMPLCAGEIRGLNNLKKFSQFLRKPYDPVADSKVIYELEQQD.

26–33 (KGGVGKTT) provides a ligand contact to ATP. D57 is an active-site residue. 2 residues coordinate ATP: E240 and N267. Zn(2+)-binding residues include C280 and C283.

It belongs to the arsA ATPase family. As to quaternary structure, homodimer. Component of the Golgi to ER traffic (GET) complex, which is composed of GET1, GET2 and GET3. Within the complex, GET1 and GET2 form a heterotetramer which is stabilized by phosphatidylinositol binding and which binds to the GET3 homodimer. Interacts with the chloride channel protein GEF1.

The protein resides in the cytoplasm. It localises to the endoplasmic reticulum. Its subcellular location is the golgi apparatus. ATPase required for the post-translational delivery of tail-anchored (TA) proteins to the endoplasmic reticulum. Recognizes and selectively binds the transmembrane domain of TA proteins in the cytosol. This complex then targets to the endoplasmic reticulum by membrane-bound receptors GET1 and GET2, where the tail-anchored protein is released for insertion. This process is regulated by ATP binding and hydrolysis. ATP binding drives the homodimer towards the closed dimer state, facilitating recognition of newly synthesized TA membrane proteins. ATP hydrolysis is required for insertion. Subsequently, the homodimer reverts towards the open dimer state, lowering its affinity for the GET1-GET2 receptor, and returning it to the cytosol to initiate a new round of targeting. Cooperates with the HDEL receptor ERD2 to mediate the ATP-dependent retrieval of resident ER proteins that contain a C-terminal H-D-E-L retention signal from the Golgi to the ER. Involved in low-level resistance to the oxyanions arsenite and arsenate, and in heat tolerance. The chain is ATPase GET3 from Kluyveromyces lactis (strain ATCC 8585 / CBS 2359 / DSM 70799 / NBRC 1267 / NRRL Y-1140 / WM37) (Yeast).